The primary structure comprises 239 residues: Transmembrane emp24 domain-containing protein 6 (239 aa).

The first 21 residues, 1 to 21 (MFPLLLVAELVVLSLVTSVKS), serve as a signal peptide directing secretion. Over 22–200 (QETDPLHGSK…FFLLQSNYTY (179 aa)) the chain is Lumenal. A GOLD domain is found at 53–138 (IECFWQFADQ…SIQVYLNFGV (86 aa)). N-linked (GlcNAc...) asparagine glycosylation is found at Asn-156 and Asn-197. A helical membrane pass occupies residues 201 to 223 (VNWWSTAQSLAIVLSGALQLYFL). Residues 224–239 (KRLFTASTTDTKKPRC) are Cytoplasmic-facing.

Belongs to the EMP24/GP25L family.

Its subcellular location is the endoplasmic reticulum membrane. This is Transmembrane emp24 domain-containing protein 6 (Tmed6) from Mus musculus (Mouse).